The following is a 499-amino-acid chain: Putative DUF21 domain-containing protein At1g03270 (499 aa).

Residues Met1–Trp32 are Extracellular-facing. Residues Gly29–Glu211 form the CNNM transmembrane domain. Residues Trp33–Leu53 traverse the membrane as a helical segment. Over Thr54–His91 the chain is Cytoplasmic. A helical membrane pass occupies residues Gln92–Leu112. Over Asp113–Lys114 the chain is Extracellular. Residues Ile115–Ile135 traverse the membrane as a helical segment. Residues Ile136–Gly145 are Cytoplasmic-facing. The chain crosses the membrane as a helical span at residues Leu146–Ile166. Residues Ala167–Arg499 lie on the Extracellular side of the membrane. Residue Asn181 is glycosylated (N-linked (GlcNAc...) asparagine). CBS domains lie at Met230–Val291, Ser295–Thr359, and His365–Glu431. N-linked (GlcNAc...) asparagine glycosylation is found at Asn357, Asn391, and Asn484.

The protein localises to the membrane. The sequence is that of Putative DUF21 domain-containing protein At1g03270 (CBSDUF4) from Arabidopsis thaliana (Mouse-ear cress).